A 418-amino-acid polypeptide reads, in one-letter code: MSDLLDDLEWRGLVADSTDREALEAHLAQGPVTFYVGFDPTAKSLHIGHLVQLMLVRALQERGHKPLLLVGGATGLIGDPKMTGERHMNDREVVAEWVESIKDQVSKYVDTDGRNAAQIVNNYDWTVKYTALDLLRDVGKHFSVNRMLARDVVARRLESGISYTEFSYVLLQSLDFYELHKRYGCTLQTGAQDQWGNITAGAEFIRKTTGDVVHGLVTPLITKADGTKYGKTESGTVWVDPELTSAYAFHQFFLNAEDSKVIEYLKIFSPRSREEIEDLARKTEEEPWRRAAQHCLADDLTDLVHGVEQRKAAEAAAQAIFGRGELRDLDERTVLSLSDELGAAHHEGGEYPTVVGAMVAAGVVDTKSGGRRAVAEGGAYLNNVKVADPDQRLTDDDFLCGRVALVRRGKKTVGALTR.

Residue Y35 participates in L-tyrosine binding. A 'HIGH' region motif is present at residues 40-49; it reads PTAKSLHIGH. The L-tyrosine site is built by Y168 and Q172. Positions 228–232 match the 'KMSKS' region motif; the sequence is KYGKT. Position 231 (K231) interacts with ATP. The S4 RNA-binding domain occupies 352-410; the sequence is PTVVGAMVAAGVVDTKSGGRRAVAEGGAYLNNVKVADPDQRLTDDDFLCGRVALVRRGK.

This sequence belongs to the class-I aminoacyl-tRNA synthetase family. TyrS type 1 subfamily. Homodimer.

It is found in the cytoplasm. The enzyme catalyses tRNA(Tyr) + L-tyrosine + ATP = L-tyrosyl-tRNA(Tyr) + AMP + diphosphate + H(+). Its function is as follows. Catalyzes the attachment of tyrosine to tRNA(Tyr) in a two-step reaction: tyrosine is first activated by ATP to form Tyr-AMP and then transferred to the acceptor end of tRNA(Tyr). This is Tyrosine--tRNA ligase from Cutibacterium acnes (strain DSM 16379 / KPA171202) (Propionibacterium acnes).